A 729-amino-acid chain; its full sequence is Fatty acid oxidation complex subunit alpha (729 aa).

The segment at 1–189 is enoyl-CoA hydratase/isomerase; it reads MLYKGDTLYL…KIGLVDGVVK (189 aa). Asp296 provides a ligand contact to substrate. The tract at residues 311–729 is 3-hydroxyacyl-CoA dehydrogenase; sequence ETPKQAAVLG…ARPVGSLKTA (419 aa). Residues Met324, Asp343, 400–402, Lys407, and Ser429 each bind NAD(+); that span reads VVE. His450 (for 3-hydroxyacyl-CoA dehydrogenase activity) is an active-site residue. Position 453 (Asn453) interacts with NAD(+). Substrate-binding residues include Asn500 and Tyr660. The disordered stretch occupies residues 708–729; it reads RHNEPYYPPVEPARPVGSLKTA.

In the N-terminal section; belongs to the enoyl-CoA hydratase/isomerase family. The protein in the C-terminal section; belongs to the 3-hydroxyacyl-CoA dehydrogenase family. As to quaternary structure, heterotetramer of two alpha chains (FadB) and two beta chains (FadA).

The enzyme catalyses a (3S)-3-hydroxyacyl-CoA + NAD(+) = a 3-oxoacyl-CoA + NADH + H(+). It carries out the reaction a (3S)-3-hydroxyacyl-CoA = a (2E)-enoyl-CoA + H2O. The catalysed reaction is a 4-saturated-(3S)-3-hydroxyacyl-CoA = a (3E)-enoyl-CoA + H2O. It catalyses the reaction (3S)-3-hydroxybutanoyl-CoA = (3R)-3-hydroxybutanoyl-CoA. The enzyme catalyses a (3Z)-enoyl-CoA = a 4-saturated (2E)-enoyl-CoA. It carries out the reaction a (3E)-enoyl-CoA = a 4-saturated (2E)-enoyl-CoA. It functions in the pathway lipid metabolism; fatty acid beta-oxidation. Functionally, involved in the aerobic and anaerobic degradation of long-chain fatty acids via beta-oxidation cycle. Catalyzes the formation of 3-oxoacyl-CoA from enoyl-CoA via L-3-hydroxyacyl-CoA. It can also use D-3-hydroxyacyl-CoA and cis-3-enoyl-CoA as substrate. The protein is Fatty acid oxidation complex subunit alpha of Salmonella choleraesuis (strain SC-B67).